The following is a 530-amino-acid chain: Probable glycerol-3-phosphate acyltransferase 2 (530 aa).

3 consecutive transmembrane segments (helical) span residues 70-90 (YFMV…LLVL), 93-113 (FISL…SFFG), and 275-295 (LVLF…LVFG). An HXXXXD motif motif is present at residues 339–344 (HRTLLD).

Belongs to the GPAT/DAPAT family. In terms of tissue distribution, weakly or not expressed in roots, leaves, seedlings, developing siliques and flower buds.

Its subcellular location is the membrane. It catalyses the reaction sn-glycerol 3-phosphate + an acyl-CoA = a 1-acyl-sn-glycero-3-phosphate + CoA. It participates in phospholipid metabolism; CDP-diacylglycerol biosynthesis; CDP-diacylglycerol from sn-glycerol 3-phosphate: step 1/3. Esterifies acyl-group from acyl-ACP to the sn-1 position of glycerol-3-phosphate, an essential step in glycerolipid biosynthesis. This chain is Probable glycerol-3-phosphate acyltransferase 2 (GPAT2), found in Arabidopsis thaliana (Mouse-ear cress).